The chain runs to 92 residues: Serine protease inhibitor I/II (92 aa).

The N-terminal stretch at 1–19 (MKLALALCAAFLLVVLVQA) is a signal peptide. Pacifastin domains lie at 20–54 (EQEC…CPPH) and 57–92 (EVTC…CPQK). 6 cysteine pairs are disulfide-bonded: Cys23–Cys38, Cys33–Cys51, Cys36–Cys46, Cys60–Cys75, Cys70–Cys89, and Cys73–Cys84.

Belongs to the protease inhibitor I19 family. Expressed in hemolymph, ovaries, testes and fat body of adults but are absent in the gut. Also present in larval hemolymph and fat body.

The protein resides in the secreted. Functionally, in vitro, is active against alpha-chymotrypsin and trypsin. In terms of biological role, in vitro, is active against alpha-chymotrypsin and pancreatic elastase. This is Serine protease inhibitor I/II from Schistocerca gregaria (Desert locust).